Reading from the N-terminus, the 360-residue chain is MSLIRLNIDSFRNIQLAQLSPSEGINLIYGQNGSGKTSILEAIYFLGMGRSFRSHLSQRVINNDQDKLTLFATLNLPRGDSKIGLRRFRSGETEVKIDGEKVKRLSTLAETLPIQVITPESFSLLFEGPKSRRQFIDWGAFHTDPQFYAAWMNVRRVLKQRNQMLRNGSPYDQIQYWDREFIRYTEQVTEIRNRYVDSLNELLKGIIGEFLPQVDVKVSFTRGWDSKTDFAQLLESQYPRDLATGHTVSGPHKADLRLRVGTLPAQDALSRGQLKLLVCALRIAQGKLLKQQIDKHSIYLVDDLPSELDAQHRQLLLKQLVDTGAQVFVTAIEPAAIVDSLHTPPSRMFHVEHGRVTVIE.

30–37 (GQNGSGKT) contacts ATP.

It belongs to the RecF family.

It is found in the cytoplasm. Functionally, the RecF protein is involved in DNA metabolism; it is required for DNA replication and normal SOS inducibility. RecF binds preferentially to single-stranded, linear DNA. It also seems to bind ATP. This chain is DNA replication and repair protein RecF, found in Shewanella oneidensis (strain ATCC 700550 / JCM 31522 / CIP 106686 / LMG 19005 / NCIMB 14063 / MR-1).